The sequence spans 445 residues: Glucose-6-phosphate isomerase (445 aa).

The active-site Proton donor is the glutamate 287. Active-site residues include histidine 308 and lysine 422.

It belongs to the GPI family.

It localises to the cytoplasm. The enzyme catalyses alpha-D-glucose 6-phosphate = beta-D-fructose 6-phosphate. It participates in carbohydrate biosynthesis; gluconeogenesis. It functions in the pathway carbohydrate degradation; glycolysis; D-glyceraldehyde 3-phosphate and glycerone phosphate from D-glucose: step 2/4. Its function is as follows. Catalyzes the reversible isomerization of glucose-6-phosphate to fructose-6-phosphate. The chain is Glucose-6-phosphate isomerase from Bacteroides fragilis (strain ATCC 25285 / DSM 2151 / CCUG 4856 / JCM 11019 / LMG 10263 / NCTC 9343 / Onslow / VPI 2553 / EN-2).